The following is a 178-amino-acid chain: C-phycoerythrin class 2 subunit beta (178 aa).

Phycourobilin is bound by residues cysteine 50 and cysteine 61. (2R,3E)-phycoerythrobilin is bound by residues cysteine 82 and cysteine 159.

This sequence belongs to the phycobiliprotein family. As to quaternary structure, heterodimer of an alpha and a beta chain. In terms of processing, contains two covalently linked phycoerythrobilin chromophores and one covalently linked phycourobilin chromophore.

The protein resides in the cellular thylakoid membrane. In terms of biological role, light-harvesting photosynthetic bile pigment-protein from the phycobiliprotein complex. This is C-phycoerythrin class 2 subunit beta (mpeB) from Synechococcus sp. (strain WH8020).